The chain runs to 382 residues: MSINVFWFLPTHGDGHYLGSSEGARAVDYSYLQQIAQAADRLGFGGVLIPTGRSCEDSWLVAASLIPVTQRLKFLVALRPGIISPTLAARQAATLDRLSNGRALFNLVTGGDPEELAAEGLHLNHTERYEASAEFTHVWRKVLEGETVDFAGKHIQVKGAKLLFPPVQHPRPPLYFGGSSAAAQDLAAEQVELYLTWGETPEQVKEKIEEVRAKAAAKGRTVRFGIRLHVIVRETTEEAWRAANRLIANLDDKTIADAQQAFARFDSVGQQRMAALHGGKKDNLEISPNLWAGVGLVRGGAGTALVGDGPTVAQRIQEYADLGIDTFVFSGYPHLEEAYRVSELLFPHLDLATTELPTQRPATQPQGEVVANIYVPQKVSQS.

Belongs to the SsuD family. In terms of assembly, homotetramer.

It catalyses the reaction an alkanesulfonate + FMNH2 + O2 = an aldehyde + FMN + sulfite + H2O + 2 H(+). Its function is as follows. Catalyzes the desulfonation of aliphatic sulfonates. The sequence is that of Alkanesulfonate monooxygenase from Yersinia pseudotuberculosis serotype IB (strain PB1/+).